The sequence spans 384 residues: Probable L-tyrosine/L-aspartate decarboxylase (384 aa).

Residue Lys-233 is modified to N6-(pyridoxal phosphate)lysine.

Belongs to the group II decarboxylase family. MfnA subfamily. Requires pyridoxal 5'-phosphate as cofactor.

It catalyses the reaction L-tyrosine + H(+) = tyramine + CO2. The catalysed reaction is L-aspartate + H(+) = beta-alanine + CO2. It participates in cofactor biosynthesis; methanofuran biosynthesis. Its pathway is cofactor biosynthesis; coenzyme A biosynthesis. Its function is as follows. Catalyzes the decarboxylation of L-tyrosine to produce tyramine for methanofuran biosynthesis. Can also catalyze the decarboxylation of L-aspartate to produce beta-alanine for coenzyme A (CoA) biosynthesis. In Methanococcus maripaludis (strain C5 / ATCC BAA-1333), this protein is Probable L-tyrosine/L-aspartate decarboxylase.